Reading from the N-terminus, the 61-residue chain is Large ribosomal subunit protein bL32 (61 aa).

A compositionally biased stretch (basic residues) spans 1–16; it reads MPTPKKKTSRSKRDMR. Residues 1–47 form a disordered region; the sequence is MPTPKKKTSRSKRDMRRSHDGLTAPAIAVEKKTGELVRPHRAHKGAD. A compositionally biased stretch (basic and acidic residues) spans 29–38; the sequence is VEKKTGELVR.

This sequence belongs to the bacterial ribosomal protein bL32 family.

The chain is Large ribosomal subunit protein bL32 from Bdellovibrio bacteriovorus (strain ATCC 15356 / DSM 50701 / NCIMB 9529 / HD100).